Reading from the N-terminus, the 195-residue chain is Imidazoleglycerol-phosphate dehydratase (195 aa).

The protein belongs to the imidazoleglycerol-phosphate dehydratase family.

It is found in the cytoplasm. It catalyses the reaction D-erythro-1-(imidazol-4-yl)glycerol 3-phosphate = 3-(imidazol-4-yl)-2-oxopropyl phosphate + H2O. Its pathway is amino-acid biosynthesis; L-histidine biosynthesis; L-histidine from 5-phospho-alpha-D-ribose 1-diphosphate: step 6/9. The sequence is that of Imidazoleglycerol-phosphate dehydratase from Cupriavidus metallidurans (strain ATCC 43123 / DSM 2839 / NBRC 102507 / CH34) (Ralstonia metallidurans).